Reading from the N-terminus, the 280-residue chain is ESX-1 secretion-associated protein EspJ (280 aa).

The residue at position 70 (serine 70) is a Phosphoserine. 2 stretches are compositionally biased toward low complexity: residues 167–181 (QTIS…QSAQ) and 246–280 (PAQA…TTTL). The disordered stretch occupies residues 167 to 280 (QTISQTAQQA…TPAPSTTTTL (114 aa)).

As to quaternary structure, residues 76-280 interact with EsxB and an artificial EsxB-EsxA heterodimer. Post-translationally, phosphorylated at Ser-70.

The protein localises to the secreted. Could be involved in regulation of growth and intracellular survival. This Mycobacterium tuberculosis (strain ATCC 25618 / H37Rv) protein is ESX-1 secretion-associated protein EspJ.